A 519-amino-acid chain; its full sequence is Glucoamylase GLU1 (519 aa).

Positions 1–27 (MKFGVLFSVFAAIVSALPLQEGPLNKR) are cleaved as a signal peptide. 2 N-linked (GlcNAc...) asparagine glycosylation sites follow: N115 and N127. W166 serves as a coordination point for substrate. N-linked (GlcNAc...) asparagine glycosylation occurs at N205. The active-site Proton acceptor is D234. Residue E237 is the Proton donor of the active site.

Belongs to the glycosyl hydrolase 15 family.

It carries out the reaction Hydrolysis of terminal (1-&gt;4)-linked alpha-D-glucose residues successively from non-reducing ends of the chains with release of beta-D-glucose.. In Saccharomycopsis fibuligera (Yeast), this protein is Glucoamylase GLU1 (GLU1).